The primary structure comprises 323 residues: Pseudouridine-5'-phosphate glycosidase (323 aa).

Glu-43 acts as the Proton donor in catalysis. Substrate-binding residues include Lys-104 and Val-124. Asp-156 serves as a coordination point for Mn(2+). 158–160 (SAD) provides a ligand contact to substrate. Lys-177 serves as the catalytic Nucleophile.

Belongs to the pseudouridine-5'-phosphate glycosidase family. Homotrimer. Mn(2+) serves as cofactor.

The enzyme catalyses D-ribose 5-phosphate + uracil = psi-UMP + H2O. Its function is as follows. Catalyzes the reversible cleavage of pseudouridine 5'-phosphate (PsiMP) to ribose 5-phosphate and uracil. Functions biologically in the cleavage direction, as part of a pseudouridine degradation pathway. In Streptomyces griseus subsp. griseus (strain JCM 4626 / CBS 651.72 / NBRC 13350 / KCC S-0626 / ISP 5235), this protein is Pseudouridine-5'-phosphate glycosidase.